A 222-amino-acid chain; its full sequence is Histidine biosynthesis bifunctional protein HisIE (222 aa).

Positions 1–128 (MQPLSPAFID…SNALSPPADA (128 aa)) are phosphoribosyl-AMP cyclohydrolase. A phosphoribosyl-ATP pyrophosphohydrolase region spans residues 129 to 222 (CTELFRVIES…AARRGAPRRH (94 aa)).

The protein in the N-terminal section; belongs to the PRA-CH family. It in the C-terminal section; belongs to the PRA-PH family.

The protein resides in the cytoplasm. The catalysed reaction is 1-(5-phospho-beta-D-ribosyl)-ATP + H2O = 1-(5-phospho-beta-D-ribosyl)-5'-AMP + diphosphate + H(+). It carries out the reaction 1-(5-phospho-beta-D-ribosyl)-5'-AMP + H2O = 1-(5-phospho-beta-D-ribosyl)-5-[(5-phospho-beta-D-ribosylamino)methylideneamino]imidazole-4-carboxamide. Its pathway is amino-acid biosynthesis; L-histidine biosynthesis; L-histidine from 5-phospho-alpha-D-ribose 1-diphosphate: step 2/9. The protein operates within amino-acid biosynthesis; L-histidine biosynthesis; L-histidine from 5-phospho-alpha-D-ribose 1-diphosphate: step 3/9. The protein is Histidine biosynthesis bifunctional protein HisIE of Parasynechococcus marenigrum (strain WH8102).